Consider the following 450-residue polypeptide: Salicylate synthase (450 aa).

The Proton donor role is filled by Glu252. Position 270–271 (270–271 (GT)) interacts with substrate. Mg(2+) is bound at residue Glu297. Substrate contacts are provided by residues Tyr385, Arg405, and 419–421 (GAG). 2 residues coordinate Mg(2+): Glu431 and Glu434. Position 438 (Lys438) interacts with substrate.

This sequence belongs to the anthranilate synthase component I family. Salicylate synthase subfamily. In terms of assembly, monomer. Mg(2+) is required as a cofactor.

It carries out the reaction chorismate = isochorismate. The enzyme catalyses isochorismate = salicylate + pyruvate. The catalysed reaction is chorismate = prephenate. The protein operates within siderophore biosynthesis; mycobactin biosynthesis. Functionally, involved in the incorporation of salicylate into the virulence-conferring salicylate-based siderophore mycobactin. Catalyzes the initial conversion of chorismate to yield the intermediate isochorismate (isochorismate synthase activity), and the subsequent elimination of the enolpyruvyl side chain in a lyase reaction to give salicylate (isochorismate pyruvate-lyase activity). In the absence of magnesium, MbtI displays a chorismate mutase activity and converts chorismate to prephenate. The protein is Salicylate synthase (mbtI) of Mycolicibacterium paratuberculosis (strain ATCC BAA-968 / K-10) (Mycobacterium paratuberculosis).